We begin with the raw amino-acid sequence, 400 residues long: Spermatogenic leucine zipper protein 1 (400 aa).

The interval 1-27 (MADSDSSSEMPAHSPSPSPIPCAKQKP) is disordered. A Phosphoserine modification is found at S106. Residues 116–127 (RNKLRFKDDLFI) form a helix-loop-helix motif region. Positions 128–193 (HFDPERENTM…HIRGEYRKLR (66 aa)) are basic motif. Coiled-coil stretches lie at residues 182 to 231 (SVHI…KDIV) and 268 to 293 (LIAA…LHLH). S207 carries the post-translational modification Phosphoserine. Residues 252–273 (LEEQVKKLSQDTHSLHLIAALL) are leucine-zipper. Residues 295–332 (AGPGHEKPLQTSGEQDKKCGEQDKKCGEQDKKCGEQDK) are disordered.

As to quaternary structure, interacts with PPP1CC isoform gamma-2. In terms of processing, phosphorylated by MAPK1/ERK2 and MAPK3/ERK1.

The protein localises to the cytoplasm. It localises to the nucleus. Transcription factor that binds to the DNA sequence 5'-CANNTG-3'(E box) and the G-box motif. May play an important role in the regulation of cell proliferation and differentiation during spermatogenesis. The sequence is that of Spermatogenic leucine zipper protein 1 (Spz1) from Rattus norvegicus (Rat).